The following is a 368-amino-acid chain: UDP-N-acetylglucosamine--N-acetylmuramyl-(pentapeptide) pyrophosphoryl-undecaprenol N-acetylglucosamine transferase (368 aa).

UDP-N-acetyl-alpha-D-glucosamine is bound by residues 16-18 (TGG), N130, R171, S197, and Q296.

It belongs to the glycosyltransferase 28 family. MurG subfamily.

The protein resides in the cell inner membrane. The catalysed reaction is di-trans,octa-cis-undecaprenyl diphospho-N-acetyl-alpha-D-muramoyl-L-alanyl-D-glutamyl-meso-2,6-diaminopimeloyl-D-alanyl-D-alanine + UDP-N-acetyl-alpha-D-glucosamine = di-trans,octa-cis-undecaprenyl diphospho-[N-acetyl-alpha-D-glucosaminyl-(1-&gt;4)]-N-acetyl-alpha-D-muramoyl-L-alanyl-D-glutamyl-meso-2,6-diaminopimeloyl-D-alanyl-D-alanine + UDP + H(+). It participates in cell wall biogenesis; peptidoglycan biosynthesis. Functionally, cell wall formation. Catalyzes the transfer of a GlcNAc subunit on undecaprenyl-pyrophosphoryl-MurNAc-pentapeptide (lipid intermediate I) to form undecaprenyl-pyrophosphoryl-MurNAc-(pentapeptide)GlcNAc (lipid intermediate II). This is UDP-N-acetylglucosamine--N-acetylmuramyl-(pentapeptide) pyrophosphoryl-undecaprenol N-acetylglucosamine transferase from Acidiphilium cryptum (strain JF-5).